A 134-amino-acid polypeptide reads, in one-letter code: Small ribosomal subunit protein uS12 (134 aa).

Position 89 is a 3-methylthioaspartic acid (aspartate 89). The interval 109-134 (KRNVSRSKYGAKKGKAGAAPTTGKKK) is disordered. The segment covering 111 to 123 (NVSRSKYGAKKGK) has biased composition (basic residues). Positions 124 to 134 (AGAAPTTGKKK) are enriched in low complexity.

It belongs to the universal ribosomal protein uS12 family. As to quaternary structure, part of the 30S ribosomal subunit. Contacts proteins S8 and S17. May interact with IF1 in the 30S initiation complex.

Its function is as follows. With S4 and S5 plays an important role in translational accuracy. Functionally, interacts with and stabilizes bases of the 16S rRNA that are involved in tRNA selection in the A site and with the mRNA backbone. Located at the interface of the 30S and 50S subunits, it traverses the body of the 30S subunit contacting proteins on the other side and probably holding the rRNA structure together. The combined cluster of proteins S8, S12 and S17 appears to hold together the shoulder and platform of the 30S subunit. This is Small ribosomal subunit protein uS12 from Wolinella succinogenes (strain ATCC 29543 / DSM 1740 / CCUG 13145 / JCM 31913 / LMG 7466 / NCTC 11488 / FDC 602W) (Vibrio succinogenes).